We begin with the raw amino-acid sequence, 606 residues long: Pescadillo homolog (606 aa).

In terms of domain architecture, BRCT spans 346 to 447 (LSTSLFSPYT…KILLEGPYGQ (102 aa)). The interval 461–497 (YEGAYDPAAGPLGPSGVEQESESEADEVSEEDEEDQG) is disordered. Residues 479 to 496 (QESESEADEVSEEDEEDQ) show a composition bias toward acidic residues.

It belongs to the pescadillo family. In terms of assembly, component of the NOP7 complex, composed of ERB1, NOP7 and YTM1. The complex is held together by ERB1, which interacts with NOP7 via its N-terminal domain and with YTM1 via a high-affinity interaction between the seven-bladed beta-propeller domains of the 2 proteins. The NOP7 complex associates with the 66S pre-ribosome.

Its subcellular location is the nucleus. It localises to the nucleolus. The protein resides in the nucleoplasm. Its function is as follows. Component of the NOP7 complex, which is required for maturation of the 25S and 5.8S ribosomal RNAs and formation of the 60S ribosome. The chain is Pescadillo homolog from Laccaria bicolor (strain S238N-H82 / ATCC MYA-4686) (Bicoloured deceiver).